The following is a 483-amino-acid chain: MTVRVRIAPSPTGNLHIGTARTAVFNWLFARHTGGTFILRVEDTDLERSKAEYTENIQSGLQWLGLNWDEGPFFQTQRLDHYRKAIQQLLDQGLAYRCYCTSEELEQMREAQKAKNQAPRYDNRHRNLTPDQEQALRAEGRQPVIRFRIDDDRQIVWQDQIRGQVVWQGSDLGGDMVIARASENPEEAFGQPLYNLAVVVDDIDMAITHVIRGEDHIANTAKQILLYEALGGAVPTFAHTPLILNQEGKKLSKRDGVTSIDDFRAMGFLPQAIANYMCLLGWTPPDSTQEIFTLAEAAEQFSLERVNKAGAKFDWQKLDWINSQYLHALPAAELVPLLIPHLEAGGHQVDPDRDQAWLVGLATLIGPSLTRLTDAATESQLLFGDRLELKEDGQKQLAVEGAKAVLEAALTFSQNTPELTLDEAKGEINRLTKELGLKKGVVMKSLRAGLMGTVQGPDLLQSWLLLQQKGWATTRLTQAIAAE.

The short motif at 9–19 (PSPTGNLHIGT) is the 'HIGH' region element. The 'KMSKS' region signature appears at 250-254 (KLSKR). K253 is an ATP binding site.

The protein belongs to the class-I aminoacyl-tRNA synthetase family. Glutamate--tRNA ligase type 1 subfamily. As to quaternary structure, monomer.

The protein localises to the cytoplasm. It catalyses the reaction tRNA(Glu) + L-glutamate + ATP = L-glutamyl-tRNA(Glu) + AMP + diphosphate. Its function is as follows. Catalyzes the attachment of glutamate to tRNA(Glu) in a two-step reaction: glutamate is first activated by ATP to form Glu-AMP and then transferred to the acceptor end of tRNA(Glu). This Synechocystis sp. (strain ATCC 27184 / PCC 6803 / Kazusa) protein is Glutamate--tRNA ligase.